The primary structure comprises 257 residues: uncharacterized protein (257 aa).

The residue at position 127 (S127) is a Phosphoserine. Disordered stretches follow at residues 146–174 (HEDP…EDDG) and 210–231 (AREK…RREK). Over residues 151–160 (PSSTYNSSIS) the composition is skewed to polar residues. A coiled-coil region spans residues 196–257 (HVRMVREVHE…QQQQEDEQKT (62 aa)).

This is an uncharacterized protein from Arabidopsis thaliana (Mouse-ear cress).